The primary structure comprises 697 residues: Probable translocation protein y4yR (697 aa).

8 helical membrane-spanning segments follow: residues 20–40 (VALM…VMAV), 42–62 (ALIG…LYVS), 67–87 (FSSL…LTVA), 107–127 (SFVI…VTMV), 200–220 (SIAG…IGLL), 235–255 (LLTI…SITA), 293–313 (VAMG…AAVF), and 372–392 (IARI…PIPV). Residues 675–697 (IRLPPSNGTSGEPRSIRPSATTG) are disordered. Residues 680-697 (SNGTSGEPRSIRPSATTG) are compositionally biased toward polar residues.

The protein belongs to the FHIPEP (flagella/HR/invasion proteins export pore) family.

The protein resides in the cell inner membrane. Functionally, could be involved in the secretion of an unknown factor. The sequence is that of Probable translocation protein y4yR from Sinorhizobium fredii (strain NBRC 101917 / NGR234).